A 288-amino-acid polypeptide reads, in one-letter code: MTAPTVPVALVTGAAKRLGRSIAEGLHAEGYAVCLHYHRSAAEANALSATLNARRPNSAITVQADLSNVATAPVSGADGSAPVTLFTRCAELVAACYTHWGRCDVLVNNASSFYPTPLLRNDEDGHEPCVGDREAMETATADLFGSNAIAPYFLIKAFAHRFAGTPAKHRGTNYSIINMVDAMTNQPLLGYTIYTMAKGALEGLTRSAALELAPLQIRVNGVGPGLSVLVDDMPPAVWEGHRSKVPLYQRDSSAAEVSDVVIFLCSSKAKYITGTCVKVDGGYSLTRA.

Residue Arg17–Ser40 participates in NADP(+) binding. Ser175 contacts substrate. The active-site Proton acceptor is the Tyr194.

This sequence belongs to the short-chain dehydrogenases/reductases (SDR) family. Homotetramer.

It catalyses the reaction (6R)-L-erythro-5,6,7,8-tetrahydrobiopterin + 2 NADP(+) = L-erythro-biopterin + 2 NADPH + 2 H(+). It functions in the pathway cofactor biosynthesis; tetrahydrobiopterin biosynthesis; tetrahydrobiopterin from biopterin: step 1/1. Exhibits a NADPH-dependent biopterin reductase activity. Has good activity with folate and significant activity with dihydrofolate and dihydrobiopterin, but not with quinonoid dihydrobiopterin. Confers resistance to methotrexate (MTX). This is Pteridine reductase 1 (PTR1) from Leishmania major.